The sequence spans 509 residues: Galactose-1-phosphate uridylyltransferase (509 aa).

This sequence belongs to the galactose-1-phosphate uridylyltransferase type 2 family.

The protein resides in the cytoplasm. The enzyme catalyses alpha-D-galactose 1-phosphate + UDP-alpha-D-glucose = alpha-D-glucose 1-phosphate + UDP-alpha-D-galactose. Its pathway is carbohydrate metabolism; galactose metabolism. In Fusobacterium nucleatum subsp. nucleatum (strain ATCC 25586 / DSM 15643 / BCRC 10681 / CIP 101130 / JCM 8532 / KCTC 2640 / LMG 13131 / VPI 4355), this protein is Galactose-1-phosphate uridylyltransferase.